A 56-amino-acid polypeptide reads, in one-letter code: Putative zinc-binding protein YnfU (56 aa).

Zn(2+) is bound by residues Cys-19, Cys-22, Cys-41, and Cys-44.

Requires Zn(2+) as cofactor.

The polypeptide is Putative zinc-binding protein YnfU (Escherichia coli (strain K12)).